Consider the following 478-residue polypeptide: Proline--tRNA ligase (478 aa).

Belongs to the class-II aminoacyl-tRNA synthetase family. ProS type 3 subfamily. As to quaternary structure, homodimer.

It is found in the cytoplasm. The enzyme catalyses tRNA(Pro) + L-proline + ATP = L-prolyl-tRNA(Pro) + AMP + diphosphate. In terms of biological role, catalyzes the attachment of proline to tRNA(Pro) in a two-step reaction: proline is first activated by ATP to form Pro-AMP and then transferred to the acceptor end of tRNA(Pro). This is Proline--tRNA ligase from Methanococcoides burtonii (strain DSM 6242 / NBRC 107633 / OCM 468 / ACE-M).